We begin with the raw amino-acid sequence, 1123 residues long: Ubiquitin carboxyl-terminal hydrolase 43 (1123 aa).

Residues 1–102 (MDLGPGDAAG…DGARPPGAQG (102 aa)) form a disordered region. A compositionally biased stretch (basic residues) spans 17–28 (RPRRRRSLRRLF). Residues 29–39 (SRFLLALGSRS) are compositionally biased toward low complexity. The region spanning 101 to 710 (QGLKNHGNTC…GAYILFYQKR (610 aa)) is the USP domain. Catalysis depends on cysteine 110, which acts as the Nucleophile. Residues 202-221 (EGSSRGPVSEKLPPEATKTS) are disordered. The active-site Proton acceptor is the histidine 668. Arginine 746 bears the Asymmetric dimethylarginine mark. Disordered regions lie at residues 795–826 (ISMK…EKPP), 854–886 (TGTA…IERG), 959–1049 (FQMG…RIPE), and 1068–1099 (SSLR…QASY). Serine 969 bears the Phosphoserine mark. Over residues 979–990 (KDSRRGTSELDR) the composition is skewed to basic and acidic residues. Positions 1016 to 1027 (VSPQVPPVSLVS) are enriched in low complexity. The residue at position 1041 (serine 1041) is a Phosphoserine.

The protein belongs to the peptidase C19 family. As to expression, expressed in brain, aorta and lung at low levels.

It catalyses the reaction Thiol-dependent hydrolysis of ester, thioester, amide, peptide and isopeptide bonds formed by the C-terminal Gly of ubiquitin (a 76-residue protein attached to proteins as an intracellular targeting signal).. Functionally, may recognize and hydrolyze the peptide bond at the C-terminal Gly of ubiquitin. Involved in the processing of poly-ubiquitin precursors as well as that of ubiquitinated proteins. The chain is Ubiquitin carboxyl-terminal hydrolase 43 (USP43) from Homo sapiens (Human).